Consider the following 337-residue polypeptide: Anthranilate phosphoribosyltransferase (337 aa).

Residues G81, 84–85, S89, 91–94, 109–117, and A121 contribute to the 5-phospho-alpha-D-ribose 1-diphosphate site; these read GD, NVST, and KHGNRAATS. Position 81 (G81) interacts with anthranilate. S93 contacts Mg(2+). Residue N112 participates in anthranilate binding. R167 lines the anthranilate pocket. Mg(2+) is bound by residues D226 and E227.

The protein belongs to the anthranilate phosphoribosyltransferase family. Homodimer. It depends on Mg(2+) as a cofactor.

It carries out the reaction N-(5-phospho-beta-D-ribosyl)anthranilate + diphosphate = 5-phospho-alpha-D-ribose 1-diphosphate + anthranilate. The protein operates within amino-acid biosynthesis; L-tryptophan biosynthesis; L-tryptophan from chorismate: step 2/5. In terms of biological role, catalyzes the transfer of the phosphoribosyl group of 5-phosphorylribose-1-pyrophosphate (PRPP) to anthranilate to yield N-(5'-phosphoribosyl)-anthranilate (PRA). In Methylorubrum extorquens (strain CM4 / NCIMB 13688) (Methylobacterium extorquens), this protein is Anthranilate phosphoribosyltransferase.